The chain runs to 98 residues: Late cornified envelope-like proline-rich protein 1 (98 aa).

Residues 1-26 (MSSDDKSKSNDPKTEPKNCDPKCEQK) form a disordered region.

It belongs to the cornifin (SPRR) family.

The chain is Late cornified envelope-like proline-rich protein 1 (LELP1) from Homo sapiens (Human).